The following is a 244-amino-acid chain: Triosephosphate isomerase (244 aa).

9–11 (NWK) provides a ligand contact to substrate. Catalysis depends on His93, which acts as the Electrophile. Catalysis depends on Glu160, which acts as the Proton acceptor. Residues Gly166 and Ser206 each coordinate substrate.

It belongs to the triosephosphate isomerase family. As to quaternary structure, homodimer.

The protein localises to the cytoplasm. It catalyses the reaction D-glyceraldehyde 3-phosphate = dihydroxyacetone phosphate. Its pathway is carbohydrate biosynthesis; gluconeogenesis. The protein operates within carbohydrate degradation; glycolysis; D-glyceraldehyde 3-phosphate from glycerone phosphate: step 1/1. Functionally, involved in the gluconeogenesis. Catalyzes stereospecifically the conversion of dihydroxyacetone phosphate (DHAP) to D-glyceraldehyde-3-phosphate (G3P). The chain is Triosephosphate isomerase from Mycoplasma pneumoniae (strain ATCC 29342 / M129 / Subtype 1) (Mycoplasmoides pneumoniae).